Reading from the N-terminus, the 450-residue chain is Keratin, type I cytoskeletal 25 (450 aa).

Positions 1 to 24 are disordered; that stretch reads MSLRLPSGSRRAGPRPTTGSLRLS. A head region spans residues 1 to 78; the sequence is MSLRLPSGSR…MNEGGLLSGN (78 aa). Residues 79–114 are coil 1A; that stretch reads EKVTMQNLNDRLASYLENVRALEEANADLEQKIKGW. Positions 79 to 394 constitute an IF rod domain; sequence EKVTMQNLND…LLIGGDDGAC (316 aa). Residues 115–136 form a linker 1 region; the sequence is YEKFGPGSCRGLDHDYSRYLPI. The tract at residues 137–228 is coil 1B; that stretch reads IEDLKNQIIA…KNHKEEMQVL (92 aa). The interval 229-251 is linker 12; sequence QCAAGGNVNVEMNAAPGVDLTVL. The interval 252–390 is coil 2; sequence LNNMRAEYEA…ETYCLLIGGD (139 aa). The interval 391–450 is tail; that stretch reads DGACKSGGYKSKDYAAGNMGNQMKDPIRAIVVKKVLEEVDQRSKVLTTRLHSLEEKSQSN. Ser-442 bears the Phosphoserine mark.

This sequence belongs to the intermediate filament family. Heterodimer of a type I and a type II keratin. Heterodimer with type II keratin KRT5 leading to the formation of keratin intermediate filament (KIF) network. Interacts with KRT6A to form filaments. Expressed in skin and wool follicle. Expression localized to the inner root sheath of wool follicle.

Its subcellular location is the cytoplasm. In terms of biological role, essential for the proper assembly of type I and type II keratin protein complexes and formation of keratin intermediate filaments in the inner root sheath (irs). Plays a role in the cytoskeleton organization. This Ovis aries (Sheep) protein is Keratin, type I cytoskeletal 25.